Here is a 369-residue protein sequence, read N- to C-terminus: S-(hydroxymethyl)glutathione dehydrogenase (369 aa).

Positions 40, 62, 92, 95, 98, 106, and 169 each coordinate Zn(2+).

The protein belongs to the zinc-containing alcohol dehydrogenase family. Class-III subfamily. In terms of assembly, homodimer. The cofactor is Zn(2+).

It is found in the cytoplasm. It catalyses the reaction S-(hydroxymethyl)glutathione + NADP(+) = S-formylglutathione + NADPH + H(+). The enzyme catalyses S-(hydroxymethyl)glutathione + NAD(+) = S-formylglutathione + NADH + H(+). It carries out the reaction a primary alcohol + NAD(+) = an aldehyde + NADH + H(+). The catalysed reaction is a secondary alcohol + NAD(+) = a ketone + NADH + H(+). It catalyses the reaction S-nitrosoglutathione + NADH + H(+) = S-(hydroxysulfenamide)glutathione + NAD(+). Has high formaldehyde dehydrogenase activity in the presence of glutathione and catalyzes the oxidation of normal alcohols in a reaction that is not GSH-dependent. In addition, hemithiolacetals other than those formed from GSH, including omega-thiol fatty acids, also are substrates. Also acts as a S-nitroso-glutathione reductase by catalyzing the NADH-dependent reduction of S-nitrosoglutathione. The polypeptide is S-(hydroxymethyl)glutathione dehydrogenase (frmA) (Escherichia coli O6:H1 (strain CFT073 / ATCC 700928 / UPEC)).